The sequence spans 284 residues: Ribosomal RNA small subunit methyltransferase A (284 aa).

S-adenosyl-L-methionine-binding residues include Asn33, Leu35, Gly60, Glu81, Asp101, and Asn124.

This sequence belongs to the class I-like SAM-binding methyltransferase superfamily. rRNA adenine N(6)-methyltransferase family. RsmA subfamily.

The protein localises to the cytoplasm. The catalysed reaction is adenosine(1518)/adenosine(1519) in 16S rRNA + 4 S-adenosyl-L-methionine = N(6)-dimethyladenosine(1518)/N(6)-dimethyladenosine(1519) in 16S rRNA + 4 S-adenosyl-L-homocysteine + 4 H(+). Its function is as follows. Specifically dimethylates two adjacent adenosines (A1518 and A1519) in the loop of a conserved hairpin near the 3'-end of 16S rRNA in the 30S particle. May play a critical role in biogenesis of 30S subunits. The sequence is that of Ribosomal RNA small subunit methyltransferase A from Chlamydia felis (strain Fe/C-56) (Chlamydophila felis).